Here is a 79-residue protein sequence, read N- to C-terminus: RNA-binding protein Hfq (79 aa).

In terms of domain architecture, Sm spans 10-69 (DPFLNALRKEHVPVSIYLVNGIKLQGNIESFDQYVVLLRNTVTQMVYKHAISTVVPARAV).

This sequence belongs to the Hfq family. As to quaternary structure, homohexamer.

Functionally, RNA chaperone that binds small regulatory RNA (sRNAs) and mRNAs to facilitate mRNA translational regulation in response to envelope stress, environmental stress and changes in metabolite concentrations. Also binds with high specificity to tRNAs. In Ralstonia nicotianae (strain ATCC BAA-1114 / GMI1000) (Ralstonia solanacearum), this protein is RNA-binding protein Hfq.